A 286-amino-acid chain; its full sequence is Leukocyte cell-derived chemotaxin 1 (286 aa).

Residues 29–49 form a helical membrane-spanning segment; it reads LVAFIAGAALLLFGGVGAFYL. The 83-residue stretch at 75 to 157 folds into the BRICHOS domain; that stretch reads DSAEGTIVEV…FCADLPIYWH (83 aa). Cys-102 and Cys-149 are joined by a disulfide. The propeptide occupies 166–169; it reads RKRR. A compositionally biased stretch (basic residues) spans 166–176; sequence RKRRSATRMRR. Positions 166-220 are disordered; the sequence is RKRRSATRMRRQTSAGVNRQPARRRNSTASARDERPTGPEYNPENPYHQNQGSEG. N-linked (GlcNAc...) asparagine glycosylation occurs at Asn-191. 4 disulfide bridges follow: Cys-234-Cys-238, Cys-235-Cys-275, Cys-245-Cys-269, and Cys-249-Cys-265.

Belongs to the chondromodulin-1 family. Post-translationally, after cleavage, the post-translationally modified ChM-I is secreted as a glycoprotein.

It localises to the secreted. It is found in the extracellular space. Its subcellular location is the extracellular matrix. The protein localises to the endomembrane system. Its function is as follows. Bifunctional growth regulator. May contribute to the rapid growth of cartilage and vascular invasion prior to the replacement of cartilage by bone during endochondral bone development. Plays a role as antiangiogenic factor in cardiac valves to suppress neovascularization. This chain is Leukocyte cell-derived chemotaxin 1, found in Danio rerio (Zebrafish).